A 199-amino-acid chain; its full sequence is TATA-box-binding protein (199 aa).

2 tandem repeats follow at residues 10–86 (IENI…VKLL) and 101–177 (VQNI…YNQL).

It belongs to the TBP family.

In terms of biological role, general factor that plays a role in the activation of archaeal genes transcribed by RNA polymerase. Binds specifically to the TATA box promoter element which lies close to the position of transcription initiation. The chain is TATA-box-binding protein from Pyrobaculum islandicum (strain DSM 4184 / JCM 9189 / GEO3).